The following is a 376-amino-acid chain: Mitochondrial distribution and morphology protein 34 (376 aa).

In terms of domain architecture, SMP-LTD spans 1–194 (MSFTFNWPRF…LPGIIHRLSQ (194 aa)). Disordered regions lie at residues 207-249 (SKHP…PKIV) and 286-376 (SVPP…LHPS). Over residues 218–230 (EISEPGDYGEEGE) the composition is skewed to acidic residues. Basic residues predominate over residues 306-318 (VKAKRKRTYRLGG). The span at 350–362 (MDRYFRSYDDHSR) shows a compositional bias: basic and acidic residues.

This sequence belongs to the MDM34 family. Component of the ER-mitochondria encounter structure (ERMES) or MDM complex, composed of MMM1, MDM10, MDM12 and MDM34.

Its subcellular location is the mitochondrion outer membrane. Functionally, component of the ERMES/MDM complex, which serves as a molecular tether to connect the endoplasmic reticulum (ER) and mitochondria. Components of this complex are involved in the control of mitochondrial shape and protein biogenesis, and function in nonvesicular lipid trafficking between the ER and mitochondria. MDM34 is required for the interaction of the ER-resident membrane protein MMM1 and the outer mitochondrial membrane-resident beta-barrel protein MDM10. The sequence is that of Mitochondrial distribution and morphology protein 34 from Laccaria bicolor (strain S238N-H82 / ATCC MYA-4686) (Bicoloured deceiver).